The primary structure comprises 100 residues: Urease subunit gamma (100 aa).

Belongs to the urease gamma subunit family. In terms of assembly, heterotrimer of UreA (gamma), UreB (beta) and UreC (alpha) subunits. Three heterotrimers associate to form the active enzyme.

It localises to the cytoplasm. It catalyses the reaction urea + 2 H2O + H(+) = hydrogencarbonate + 2 NH4(+). It functions in the pathway nitrogen metabolism; urea degradation; CO(2) and NH(3) from urea (urease route): step 1/1. This chain is Urease subunit gamma, found in Allorhizobium ampelinum (strain ATCC BAA-846 / DSM 112012 / S4) (Agrobacterium vitis (strain S4)).